We begin with the raw amino-acid sequence, 141 residues long: Hemoglobin subunit alpha (141 aa).

One can recognise a Globin domain in the interval 1 to 141; the sequence is VLSPADKTNV…VSTVLTSKYR (141 aa). Ser-3 is modified (phosphoserine). Lys-7 bears the N6-succinyllysine mark. Thr-8 bears the Phosphothreonine mark. Residue Lys-11 is modified to N6-succinyllysine. Lys-16 carries the N6-acetyllysine; alternate modification. Lys-16 bears the N6-succinyllysine; alternate mark. Residue Tyr-24 is modified to Phosphotyrosine. Residue Ser-35 is modified to Phosphoserine. N6-succinyllysine is present on Lys-40. Ser-49 is subject to Phosphoserine. His-58 contributes to the O2 binding site. A heme b-binding site is contributed by His-87. At Ser-102 the chain carries Phosphoserine. Residue Thr-108 is modified to Phosphothreonine. Ser-124 bears the Phosphoserine mark. Residues Thr-134 and Thr-137 each carry the phosphothreonine modification. Ser-138 carries the post-translational modification Phosphoserine.

The protein belongs to the globin family. In terms of assembly, heterotetramer of two alpha chains and two beta chains. As to expression, red blood cells.

Functionally, involved in oxygen transport from the lung to the various peripheral tissues. Its function is as follows. Hemopressin acts as an antagonist peptide of the cannabinoid receptor CNR1. Hemopressin-binding efficiently blocks cannabinoid receptor CNR1 and subsequent signaling. This Martes foina (Beech marten) protein is Hemoglobin subunit alpha (HBA).